The chain runs to 540 residues: Chaperonin GroEL 1 (540 aa).

ATP-binding positions include 29-32 (TLGP), 86-90 (DGTTT), Gly413, 477-479 (NAA), and Asp493.

It belongs to the chaperonin (HSP60) family. As to quaternary structure, forms a cylinder of 14 subunits composed of two heptameric rings stacked back-to-back. Interacts with the co-chaperonin GroES.

It localises to the cytoplasm. The catalysed reaction is ATP + H2O + a folded polypeptide = ADP + phosphate + an unfolded polypeptide.. Together with its co-chaperonin GroES, plays an essential role in assisting protein folding. The GroEL-GroES system forms a nano-cage that allows encapsulation of the non-native substrate proteins and provides a physical environment optimized to promote and accelerate protein folding. In Salinispora arenicola (strain CNS-205), this protein is Chaperonin GroEL 1.